Reading from the N-terminus, the 329-residue chain is MAP kinase-activated protein kinase 2 (329 aa).

ATP-binding positions include 1-7 and lysine 22; that span reads LGINGKV. Positions 1–254 constitute a Protein kinase domain; sequence LGINGKVLRI…ITEFMNHPWI (254 aa). 68–70 provides a ligand contact to staurosporine; it reads ECL. The Proton acceptor role is filled by aspartate 115. A Phosphothreonine; by MAPK14 modification is found at threonine 151. Position 201 is a phosphoserine; by MAPK14 (serine 201). Serine 257 carries the phosphoserine; by autocatalysis modification. Positions 257-293 are autoinhibitory helix; that stretch reads STKVPQTPLHTSRVLKEDKERWEDVKEEMTSALATMR. Threonine 263 carries the phosphothreonine; by MAPK14 modification. A Glycyl lysine isopeptide (Lys-Gly) (interchain with G-Cter in SUMO) cross-link involves residue lysine 282. A Nuclear export signal (NES) motif is present at residues 285-294; it reads MTSALATMRV. The interval 295–319 is p38 MAPK-binding site; it reads DYEQIKIKKIEDASNPLLLKRRKKA. Short sequence motifs (bipartite nuclear localization signal) lie at residues 300–303 and 314–318; these read KIKK and KRRKK.

It belongs to the protein kinase superfamily. CAMK Ser/Thr protein kinase family. In terms of assembly, heterodimer with p38-alpha/MAPK14; this heterodimer forms a stable complex: molecules are positioned 'face to face' so that the ATP-binding sites of both kinases are at the heterodimer interface. Interacts with PHC2. Interacts with HSF1. Post-translationally, sumoylation inhibits the protein kinase activity. Phosphorylated and activated by MAP kinase p38-alpha/MAPK14 at Thr-151, Ser-201 and Thr-263.

Its subcellular location is the cytoplasm. The protein resides in the nucleus. The enzyme catalyses L-seryl-[protein] + ATP = O-phospho-L-seryl-[protein] + ADP + H(+). It carries out the reaction L-threonyl-[protein] + ATP = O-phospho-L-threonyl-[protein] + ADP + H(+). With respect to regulation, activated following phosphorylation by p38-alpha/MAPK14 following various stresses. Inhibited following sumoylation. Specifically inhibited by pyrrolopyridine inhibitors. In terms of biological role, stress-activated serine/threonine-protein kinase involved in cytokine production, endocytosis, reorganization of the cytoskeleton, cell migration, cell cycle control, chromatin remodeling, DNA damage response and transcriptional regulation. Following stress, it is phosphorylated and activated by MAP kinase p38-alpha/MAPK14, leading to phosphorylation of substrates. Phosphorylates serine in the peptide sequence, Hyd-X-R-X(2)-S, where Hyd is a large hydrophobic residue. Phosphorylates ALOX5, CDC25B, CDC25C, CEP131, ELAVL1, HNRNPA0, HSP27/HSPB1, KRT18, KRT20, LIMK1, LSP1, PABPC1, PARN, PDE4A, RCSD1, RPS6KA3, TAB3 and TTP/ZFP36. Phosphorylates HSF1; leading to the interaction with HSP90 proteins and inhibiting HSF1 homotrimerization, DNA-binding and transactivation activities. Mediates phosphorylation of HSP27/HSPB1 in response to stress, leading to the dissociation of HSP27/HSPB1 from large small heat-shock protein (sHsps) oligomers and impairment of their chaperone activities and ability to protect against oxidative stress effectively. Involved in inflammatory response by regulating tumor necrosis factor (TNF) and IL6 production post-transcriptionally: acts by phosphorylating AU-rich elements (AREs)-binding proteins ELAVL1, HNRNPA0, PABPC1 and TTP/ZFP36, leading to regulation of the stability and translation of TNF and IL6 mRNAs. Phosphorylation of TTP/ZFP36, a major post-transcriptional regulator of TNF, promotes its binding to 14-3-3 proteins and reduces its ARE mRNA affinity, leading to inhibition of dependent degradation of ARE-containing transcripts. Phosphorylates CEP131 in response to cellular stress following ultraviolet irradiation which promotes binding of CEP131 to 14-3-3 proteins and inhibits formation of novel centriolar satellites. Also involved in late G2/M checkpoint following DNA damage through a process of post-transcriptional mRNA stabilization: following DNA damage, relocalizes from nucleus to cytoplasm and phosphorylates HNRNPA0 and PARN, leading to stabilization of GADD45A mRNA. Involved in toll-like receptor signaling pathway (TLR) in dendritic cells: required for acute TLR-induced macropinocytosis by phosphorylating and activating RPS6KA3. The polypeptide is MAP kinase-activated protein kinase 2 (MAPKAPK2) (Cricetulus longicaudatus (Long-tailed dwarf hamster)).